The sequence spans 464 residues: ATP-dependent protease ATPase subunit HslU (464 aa).

ATP-binding positions include valine 18, 60–65, aspartate 277, glutamate 342, and arginine 414; that span reads GVGKTE.

The protein belongs to the ClpX chaperone family. HslU subfamily. In terms of assembly, a double ring-shaped homohexamer of HslV is capped on each side by a ring-shaped HslU homohexamer. The assembly of the HslU/HslV complex is dependent on binding of ATP.

It is found in the cytoplasm. In terms of biological role, ATPase subunit of a proteasome-like degradation complex; this subunit has chaperone activity. The binding of ATP and its subsequent hydrolysis by HslU are essential for unfolding of protein substrates subsequently hydrolyzed by HslV. HslU recognizes the N-terminal part of its protein substrates and unfolds these before they are guided to HslV for hydrolysis. The protein is ATP-dependent protease ATPase subunit HslU of Lactobacillus delbrueckii subsp. bulgaricus (strain ATCC 11842 / DSM 20081 / BCRC 10696 / JCM 1002 / NBRC 13953 / NCIMB 11778 / NCTC 12712 / WDCM 00102 / Lb 14).